The chain runs to 142 residues: MLMPKRVKYRKQHRGRTKGDAKGGALVMFGEYGLKALEPAWITAQQIEACRLAITRTLKKEGKLWIKIFPDKSYTKHPPETKLGKGKGNVEGWVAVVKPGKVMFEIGGVEEELAIKALEYAATKLPIKTKIVTRHHIGGEAV.

It belongs to the universal ribosomal protein uL16 family. Part of the 50S ribosomal subunit.

In terms of biological role, binds 23S rRNA and is also seen to make contacts with the A and possibly P site tRNAs. The sequence is that of Large ribosomal subunit protein uL16 from Fervidobacterium nodosum (strain ATCC 35602 / DSM 5306 / Rt17-B1).